We begin with the raw amino-acid sequence, 38 residues long: Mu-agatoxin-Hc1b (38 aa).

Disulfide bonds link C3-C19, C10-C24, C18-C34, and C26-C32. S38 carries the post-translational modification Serine amide.

Belongs to the neurotoxin 07 (Beta/delta-agtx) family. 02 (aga-3) subfamily. Expressed by the venom gland.

It localises to the secreted. Its function is as follows. Insecticidal neurotoxin that induces irreversible neuromuscular blockade in house crickets (A.domesticus). Modifies presynaptic voltage-gated sodium channels (Nav), causing them to open at the normal resting potential of the nerve. This leads to spontaneous release of neurotransmitter and repetitive action potentials in motor neurons. The sequence is that of Mu-agatoxin-Hc1b from Hololena curta (Funnel-web spider).